The primary structure comprises 172 residues: Peptidyl-tRNA hydrolase (172 aa).

A tRNA-binding site is contributed by Y10. H15 serves as the catalytic Proton acceptor. F59, N61, and N101 together coordinate tRNA.

Belongs to the PTH family. In terms of assembly, monomer.

The protein localises to the cytoplasm. The enzyme catalyses an N-acyl-L-alpha-aminoacyl-tRNA + H2O = an N-acyl-L-amino acid + a tRNA + H(+). In terms of biological role, hydrolyzes ribosome-free peptidyl-tRNAs (with 1 or more amino acids incorporated), which drop off the ribosome during protein synthesis, or as a result of ribosome stalling. Functionally, catalyzes the release of premature peptidyl moieties from peptidyl-tRNA molecules trapped in stalled 50S ribosomal subunits, and thus maintains levels of free tRNAs and 50S ribosomes. The protein is Peptidyl-tRNA hydrolase of Rubrobacter xylanophilus (strain DSM 9941 / JCM 11954 / NBRC 16129 / PRD-1).